A 146-amino-acid polypeptide reads, in one-letter code: Hemoglobin subunit beta (146 aa).

One can recognise a Globin domain in the interval 2 to 146 (HWTAEEKQLI…VAHALARKYH (145 aa)). The heme b site is built by histidine 63 and histidine 92.

Belongs to the globin family. Heterotetramer of two alpha chains and two beta chains. In terms of tissue distribution, red blood cells.

Involved in oxygen transport from the lung to the various peripheral tissues. The sequence is that of Hemoglobin subunit beta (HBB) from Branta canadensis (Canada goose).